The following is a 200-amino-acid chain: Small ribosomal subunit protein uS4 (200 aa).

Positions serine 92–valine 155 constitute an S4 RNA-binding domain.

It belongs to the universal ribosomal protein uS4 family. In terms of assembly, part of the 30S ribosomal subunit. Contacts protein S5. The interaction surface between S4 and S5 is involved in control of translational fidelity.

One of the primary rRNA binding proteins, it binds directly to 16S rRNA where it nucleates assembly of the body of the 30S subunit. Functionally, with S5 and S12 plays an important role in translational accuracy. This is Small ribosomal subunit protein uS4 from Macrococcus caseolyticus (strain JCSC5402) (Macrococcoides caseolyticum).